We begin with the raw amino-acid sequence, 163 residues long: Putative pre-16S rRNA nuclease (163 aa).

The protein belongs to the YqgF nuclease family.

Its subcellular location is the cytoplasm. Its function is as follows. Could be a nuclease involved in processing of the 5'-end of pre-16S rRNA. The protein is Putative pre-16S rRNA nuclease of Rhodopseudomonas palustris (strain BisB18).